Reading from the N-terminus, the 417-residue chain is MAEGSYGFLCREDGSWWRSWLQQSYTSVRDKSAEALEFMKRDLNEFTRVVQHDTACTIAATASVVKEKLVVEGSSGTTEKVKKGLSDFLGVISDTFAPSPDKTIDCDVITLMATPSGTTELYDSTKARLYSLQSDPATYCNEPDGSPAEFDAWLAYWDPEQRKAEISEPLVTSPSIRALFTKMVPAAVSHSEFWQRYFYKVHQLEQEEARRDALKQRANQSVHSEEPKWEEEEEDFVGAALTPALKLKEKCVISPPTIPTLHVEDKSEKTAELNRDHTSVTSPSESSESISPITQIANPEYIEQTSSKDPSLCTLTVTKEKIAAETDKSSAPVEQTGKSNAQMGTHREDPPSDLRVFELNSDSGKSTPSNNGQKGSSTDVSEDWEKDFDMTEEEVQMALSGVEVSGEVEDEDWENWE.

The BSD domain occupies 153–205; the sequence is WLAYWDPEQRKAEISEPLVTSPSIRALFTKMVPAAVSHSEFWQRYFYKVHQLE. Disordered regions lie at residues 215-234, 262-292, and 323-390; these read KQRA…EEEE, HVED…SISP, and AAET…DFDM. Positions 262-278 are enriched in basic and acidic residues; it reads HVEDKSEKTAELNRDHT. The span at 281–292 shows a compositional bias: low complexity; it reads TSPSESSESISP. Over residues 332-343 the composition is skewed to polar residues; sequence PVEQTGKSNAQM. The span at 345-356 shows a compositional bias: basic and acidic residues; it reads THREDPPSDLRV. Polar residues predominate over residues 360–379; sequence NSDSGKSTPSNNGQKGSSTD. A compositionally biased stretch (acidic residues) spans 380–390; it reads VSEDWEKDFDM.

This Xenopus laevis (African clawed frog) protein is BSD domain-containing protein 1-B (bsdc1-b).